Here is a 590-residue protein sequence, read N- to C-terminus: Membrane protein insertase YidC (590 aa).

5 helical membrane passes run 5–25 (SVIG…FMKP), 368–388 (GLII…LSLA), 433–453 (LGGC…FYVF), 483–503 (LPLY…TVFF), and 519–539 (IMMW…PAGL).

The protein belongs to the OXA1/ALB3/YidC family. Type 1 subfamily. As to quaternary structure, interacts with the Sec translocase complex via SecD. Specifically interacts with transmembrane segments of nascent integral membrane proteins during membrane integration.

Its subcellular location is the cell inner membrane. In terms of biological role, required for the insertion and/or proper folding and/or complex formation of integral membrane proteins into the membrane. Involved in integration of membrane proteins that insert both dependently and independently of the Sec translocase complex, as well as at least some lipoproteins. Aids folding of multispanning membrane proteins. This Chlorobaculum tepidum (strain ATCC 49652 / DSM 12025 / NBRC 103806 / TLS) (Chlorobium tepidum) protein is Membrane protein insertase YidC.